We begin with the raw amino-acid sequence, 129 residues long: Lysozyme C (129 aa).

Residues 1 to 129 form the C-type lysozyme domain; that stretch reads KVYGRCELAA…VQAWIRGCRL (129 aa). 4 disulfides stabilise this stretch: C6–C127, C30–C115, C64–C80, and C76–C94. Residues E35 and D52 contribute to the active site.

The protein belongs to the glycosyl hydrolase 22 family. As to quaternary structure, monomer.

It localises to the secreted. It carries out the reaction Hydrolysis of (1-&gt;4)-beta-linkages between N-acetylmuramic acid and N-acetyl-D-glucosamine residues in a peptidoglycan and between N-acetyl-D-glucosamine residues in chitodextrins.. In terms of biological role, lysozymes have primarily a bacteriolytic function; those in tissues and body fluids are associated with the monocyte-macrophage system and enhance the activity of immunoagents. This is Lysozyme C (LYZ) from Tragopan satyra (Satyr tragopan).